The chain runs to 541 residues: Membrane protein insertase YidC (541 aa).

A helical membrane pass occupies residues S6–D26. The disordered stretch occupies residues E34–I56. 4 helical membrane-spanning segments follow: residues F337–V357, L416–F436, L454–L474, and P495–V515.

It belongs to the OXA1/ALB3/YidC family. Type 1 subfamily. In terms of assembly, interacts with the Sec translocase complex via SecD. Specifically interacts with transmembrane segments of nascent integral membrane proteins during membrane integration.

It is found in the cell inner membrane. In terms of biological role, required for the insertion and/or proper folding and/or complex formation of integral membrane proteins into the membrane. Involved in integration of membrane proteins that insert both dependently and independently of the Sec translocase complex, as well as at least some lipoproteins. Aids folding of multispanning membrane proteins. The protein is Membrane protein insertase YidC of Haemophilus influenzae (strain 86-028NP).